The primary structure comprises 457 residues: uncharacterized protein (457 aa).

Lys75 is modified (N6-(pyridoxal phosphate)lysine).

Pyridoxal 5'-phosphate serves as cofactor.

This is an uncharacterized protein from Sinorhizobium fredii (strain NBRC 101917 / NGR234).